The chain runs to 343 residues: N-acetyl-gamma-glutamyl-phosphate reductase (343 aa).

Cysteine 147 is an active-site residue.

It belongs to the NAGSA dehydrogenase family. Type 1 subfamily.

It is found in the cytoplasm. It catalyses the reaction N-acetyl-L-glutamate 5-semialdehyde + phosphate + NADP(+) = N-acetyl-L-glutamyl 5-phosphate + NADPH + H(+). It participates in amino-acid biosynthesis; L-arginine biosynthesis; N(2)-acetyl-L-ornithine from L-glutamate: step 3/4. Functionally, catalyzes the NADPH-dependent reduction of N-acetyl-5-glutamyl phosphate to yield N-acetyl-L-glutamate 5-semialdehyde. The polypeptide is N-acetyl-gamma-glutamyl-phosphate reductase (Listeria monocytogenes serotype 4b (strain F2365)).